A 348-amino-acid polypeptide reads, in one-letter code: Anthranilate phosphoribosyltransferase (348 aa).

5-phospho-alpha-D-ribose 1-diphosphate-binding positions include G89, 92–93, T97, 99–102, 117–125, and S129; these read GD, NIST, and KHGNRSASS. Position 89 (G89) interacts with anthranilate. S101 lines the Mg(2+) pocket. Anthranilate is bound at residue N120. R175 provides a ligand contact to anthranilate. Mg(2+) is bound by residues D234 and E235.

The protein belongs to the anthranilate phosphoribosyltransferase family. Homodimer. The cofactor is Mg(2+).

The catalysed reaction is N-(5-phospho-beta-D-ribosyl)anthranilate + diphosphate = 5-phospho-alpha-D-ribose 1-diphosphate + anthranilate. It participates in amino-acid biosynthesis; L-tryptophan biosynthesis; L-tryptophan from chorismate: step 2/5. Functionally, catalyzes the transfer of the phosphoribosyl group of 5-phosphorylribose-1-pyrophosphate (PRPP) to anthranilate to yield N-(5'-phosphoribosyl)-anthranilate (PRA). In Synechocystis sp. (strain ATCC 27184 / PCC 6803 / Kazusa), this protein is Anthranilate phosphoribosyltransferase.